We begin with the raw amino-acid sequence, 588 residues long: Proteasome-associated ATPase (588 aa).

A compositionally biased stretch (basic and acidic residues) spans 1–10 (MAAHDDDMNR). Positions 1–23 (MAAHDDDMNRGIRPGRGSDDPSG) are disordered. The stretch at 47 to 94 (RILEERIVELQTNLAGVSAQNERLANTLREARDQIVALKEEVDRLAQP) forms a coiled coil. 276–281 (GCGKTL) contacts ATP. The segment at 587 to 588 (YL) is docks into pockets in the proteasome alpha-ring.

It belongs to the AAA ATPase family. As to quaternary structure, homohexamer. Assembles into a hexameric ring structure that caps the 20S proteasome core. Strongly interacts with the prokaryotic ubiquitin-like protein Pup through a hydrophobic interface; the interacting region of ARC lies in its N-terminal coiled-coil domain. There is one Pup binding site per ARC hexamer ring. Upon ATP-binding, the C-terminus of ARC interacts with the alpha-rings of the proteasome core, possibly by binding to the intersubunit pockets.

Its pathway is protein degradation; proteasomal Pup-dependent pathway. Functionally, ATPase which is responsible for recognizing, binding, unfolding and translocation of pupylated proteins into the bacterial 20S proteasome core particle. May be essential for opening the gate of the 20S proteasome via an interaction with its C-terminus, thereby allowing substrate entry and access to the site of proteolysis. Thus, the C-termini of the proteasomal ATPase may function like a 'key in a lock' to induce gate opening and therefore regulate proteolysis. In Streptomyces scabiei (strain 87.22), this protein is Proteasome-associated ATPase.